We begin with the raw amino-acid sequence, 153 residues long: Putative pre-16S rRNA nuclease (153 aa).

This sequence belongs to the YqgF nuclease family.

The protein localises to the cytoplasm. Its function is as follows. Could be a nuclease involved in processing of the 5'-end of pre-16S rRNA. The chain is Putative pre-16S rRNA nuclease from Chloroflexus aurantiacus (strain ATCC 29366 / DSM 635 / J-10-fl).